Consider the following 163-residue polypeptide: 3-hydroxyacyl-[acyl-carrier-protein] dehydratase FabZ (163 aa).

His64 is an active-site residue.

It belongs to the thioester dehydratase family. FabZ subfamily.

It localises to the cytoplasm. The enzyme catalyses a (3R)-hydroxyacyl-[ACP] = a (2E)-enoyl-[ACP] + H2O. In terms of biological role, involved in unsaturated fatty acids biosynthesis. Catalyzes the dehydration of short chain beta-hydroxyacyl-ACPs and long chain saturated and unsaturated beta-hydroxyacyl-ACPs. This is 3-hydroxyacyl-[acyl-carrier-protein] dehydratase FabZ from Caulobacter sp. (strain K31).